We begin with the raw amino-acid sequence, 381 residues long: EPS I polysaccharide export outer membrane protein EpsA (381 aa).

The N-terminal stretch at 1–23 (MFVSIPNIRKAVVSLSVVPLLAA) is a signal peptide. Cysteine 24 is lipidated: N-palmitoyl cysteine. Residue cysteine 24 is the site of S-diacylglycerol cysteine attachment.

It belongs to the BexD/CtrA/VexA family.

It localises to the cell outer membrane. Probably involved in polymerization and/or export of exopolysaccharide EPS I which functions as a virulence factor. The polypeptide is EPS I polysaccharide export outer membrane protein EpsA (epsA) (Ralstonia nicotianae (strain ATCC BAA-1114 / GMI1000) (Ralstonia solanacearum)).